Here is an 81-residue protein sequence, read N- to C-terminus: Apolipoprotein C-I, acidic form (81 aa).

Residues 1–24 form the signal peptide; that stretch reads MRLFLSLLVVVLSMVLKGPTPAQG.

Belongs to the apolipoprotein C1 family.

The protein resides in the secreted. The protein is Apolipoprotein C-I, acidic form (APOC1A) of Macaca fascicularis (Crab-eating macaque).